The primary structure comprises 497 residues: Solute carrier family 2, facilitated glucose transporter member 6 (497 aa).

Over 1–36 (MQEPLLRTEGLDYDTFPEVPATPGERERAGALKNRR) the chain is Cytoplasmic. Residues 5–6 (LL) carry the Dileucine internalization motif motif. Residues 37-57 (VFLATFAAVLGNFSFGYALVY) form a helical membrane-spanning segment. Residues 58–80 (TSPVIPELKLSSDPALHLDKIQA) are Extracellular-facing. The chain crosses the membrane as a helical span at residues 81 to 101 (SWFGSVFTLGAAAGGLSAMLL). The Cytoplasmic portion of the chain corresponds to 102–115 (NDLLGRKLSIMFSA). A helical transmembrane segment spans residues 116 to 136 (VPSAIGYAIMAGARGLWMLLL). The Extracellular segment spans residues 137–138 (GR). A helical membrane pass occupies residues 139–159 (MLTGFAGGLTAACIPVYVSEI). The Cytoplasmic portion of the chain corresponds to 160-171 (APPDVRGALGAT). Residues 172–192 (PQLMAVFGSLSLYALGLLLPW) traverse the membrane as a helical segment. An a D-hexose-binding site is contributed by Gln173. Arg193 is a topological domain (extracellular). The chain crosses the membrane as a helical span at residues 194 to 214 (WLAVAGEGPVLIMILLLSFMP). The Cytoplasmic portion of the chain corresponds to 215–273 (NSPRFLLSKSRDEEALQALTWLRADSEVHWEFEQIQDNVRRQSSRVSWAEAREPRVYRP). The helical transmembrane segment at 274-294 (VLIAVLMRFLQQLTGITPILV) threads the bilayer. 284–285 (QQ) contributes to the a D-hexose binding site. The Extracellular portion of the chain corresponds to 295–312 (YLQTIFDNTSVVLPSQQD). A glycan (N-linked (GlcNAc...) asparagine) is linked at Asn302. The chain crosses the membrane as a helical span at residues 313–333 (AAIVGAVRLLSVLIAAVTMDL). Residues 334–337 (AGRK) are Cytoplasmic-facing. A helical transmembrane segment spans residues 338–358 (VLLYVSASVMFAANLTLGLYV). Over 359-385 (QFVPRPLTPNSTVEIVTLGDTAFNYLT) the chain is Extracellular. N-linked (GlcNAc...) asparagine glycosylation is present at Asn368. A helical transmembrane segment spans residues 386 to 406 (LIPLLATMLFIMGYAMGWGPI). Residues 407–425 (TWLLMSEVLPLRARGVASG) are Cytoplasmic-facing. Trp408 contacts a D-hexose. Residues 426–446 (LCVLVSWLTAFVLTNYFLLAV) traverse the membrane as a helical segment. Position 447 (Asn447) is a topological domain, extracellular. A helical transmembrane segment spans residues 448-468 (AFGLQVPFFFFSAICLLSLLF). Over 469–497 (TGCCVPETRGRSLEQIEAFFHTRRMSFRP) the chain is Cytoplasmic.

Belongs to the major facilitator superfamily. Sugar transporter (TC 2.A.1.1) family. Mainly expressed in brain and spleen. Also expressed in lung, heart, muscle, liver, kidney, fat, whole blood, testes, ovaries and uterus.

It localises to the lysosome membrane. Functionally, probable sugar transporter that acts as a regulator of glycolysis in macrophages. Does not transport glucose. The protein is Solute carrier family 2, facilitated glucose transporter member 6 of Mus musculus (Mouse).